We begin with the raw amino-acid sequence, 169 residues long: Succinate dehydrogenase cytochrome b560 subunit, mitochondrial (169 aa).

A mitochondrion-targeting transit peptide spans 1 to 29 (MAALLLRHVGRHCLRAHLSPQLCIRNAVP). Topologically, residues 30–62 (LGTTAKEEMERFWNKNLGSNRPLSPHITIYRWS) are mitochondrial matrix. The chain crosses the membrane as a helical span at residues 63 to 92 (LPMAMSICHRGTGIALSAGVSLFGLSALLL). The Mitochondrial intermembrane segment spans residues 93-112 (PGNFESHLELVKSLCLGPTL). A helical membrane pass occupies residues 113–137 (IYTAKFGIVFPLMYHTWNGIRHLIW). Heme b is bound at residue His-127. The Mitochondrial matrix portion of the chain corresponds to 138-144 (DLGKGLT). Residues 145-166 (IPQLTQSGVVVLILTVLSSVGL) form a helical membrane-spanning segment. The Mitochondrial intermembrane segment spans residues 167–169 (AAM).

The protein belongs to the cytochrome b560 family. In terms of assembly, component of complex II composed of four subunits: the flavoprotein (FP) SDHA, iron-sulfur protein (IP) SDHB, and a cytochrome b560 composed of SDHC and SDHD. Heme b serves as cofactor. As to expression, detected in heart muscle (at protein level).

The protein localises to the mitochondrion inner membrane. It functions in the pathway carbohydrate metabolism; tricarboxylic acid cycle. Its function is as follows. Membrane-anchoring subunit of succinate dehydrogenase (SDH) that is involved in complex II of the mitochondrial electron transport chain and is responsible for transferring electrons from succinate to ubiquinone (coenzyme Q). SDH also oxidizes malate to the non-canonical enol form of oxaloacetate, enol-oxaloacetate. Enol-oxaloacetate, which is a potent inhibitor of the succinate dehydrogenase activity, is further isomerized into keto-oxaloacetate. The chain is Succinate dehydrogenase cytochrome b560 subunit, mitochondrial (SDHC) from Sus scrofa (Pig).